The following is a 201-amino-acid chain: FMN-dependent NADH:quinone oxidoreductase (201 aa).

Residues serine 10, 16 to 18 (SQS), and 96 to 99 (MYNF) contribute to the FMN site.

This sequence belongs to the azoreductase type 1 family. In terms of assembly, homodimer. FMN is required as a cofactor.

The catalysed reaction is 2 a quinone + NADH + H(+) = 2 a 1,4-benzosemiquinone + NAD(+). It carries out the reaction N,N-dimethyl-1,4-phenylenediamine + anthranilate + 2 NAD(+) = 2-(4-dimethylaminophenyl)diazenylbenzoate + 2 NADH + 2 H(+). Quinone reductase that provides resistance to thiol-specific stress caused by electrophilic quinones. Functionally, also exhibits azoreductase activity. Catalyzes the reductive cleavage of the azo bond in aromatic azo compounds to the corresponding amines. The sequence is that of FMN-dependent NADH:quinone oxidoreductase from Sodalis glossinidius (strain morsitans).